We begin with the raw amino-acid sequence, 213 residues long: Isomeliandiol synthase MOI2 (213 aa).

A run of 5 helical transmembrane segments spans residues 18 to 38 (AALH…SWFI), 52 to 72 (VLCW…YYVF), 109 to 129 (IESM…YALA), 137 to 157 (ILQF…FLSA), and 171 to 191 (YWAY…LIAI). One can recognise an EXPERA domain in the interval 48 to 190 (MDRVVLCWWA…IWVIVPALIA (143 aa)).

Belongs to the EBP family. Mainly expressed in petioles.

It localises to the membrane. It carries out the reaction 7,8-epoxymelianol = isomeliandiol. It participates in secondary metabolite biosynthesis; terpenoid biosynthesis. Isomerase involved in the biosynthesis of limonoids triterpene natural products such as azadirachtin, an antifeedant widely used as bioinsecticide, and possessing many medicinal applications including anti-tumoral, anti-malarial, anti-rheumatic, antibacterial, anti-inflammatory, anti-pyretic and diuretic effects. Catalyzes the conversion of 7,8-epoxymelianol to isomeliandiol via skeletal rearrangements. The sequence is that of Isomeliandiol synthase MOI2 from Melia azedarach (Chinaberry tree).